The following is a 646-amino-acid chain: MGNACVGPNISGNGFLQTVTAAMWRPRIGAEQASSSSHGNGQVSKEAASEPATDQVQNKPPEPITMPSSKTNPETKLKPDLEIQPEEKKEKVLAEETKQKVVPEESKQEVPPEESKREVVVQPESAKPETKSESKPETTKPETTSETKPETKAEPQKPKHMRRVSSAGLRTESVLQRKTENFKEFYSLGRKLGQGQFGTTFLCLEKGTGNEYACKSISKRKLLTDEDVEDVRREIQIMHHLAGHPNVISIKGAYEDVVAVHLVMELCSGGELFDRIIQRGHYTERKAAELARTIVGVLEACHSLGVMHRDLKPENFLFVSREEDSLLKTIDFGLSMFFKPDEVFTDVVGSPYYVAPEVLRKRYGPESDVWSAGVIVYILLSGVPPFWAETEQGIFEQVLHGDLDFSSDPWPSISESAKDLVRKMLVRDPKRRLTAHQVLCHPWVQIDGVAPDKPLDSAVLSRMKQFSAMNKFKKMALRVIAESLSEEEIAGLKQMFKMIDADNSGQITFEELKAGLKRVGANLKESEILDLMQAADVDNSGTIDYKEFIAATLHLNKIEREDHLFAAFSYFDKDESGFITPDELQQACEEFGVEDARIEEMMRDVDQDKDGRIDYNEFVAMMQKGSIMGGPVKMGLENSISISLKH.

Residue glycine 2 is the site of N-myristoyl glycine attachment. Cysteine 5 carries the S-palmitoyl cysteine lipid modification. Residues 27–169 (RIGAEQASSS…HMRRVSSAGL (143 aa)) are disordered. The segment covering 32 to 43 (QASSSSHGNGQV) has biased composition (polar residues). 2 stretches are compositionally biased toward basic and acidic residues: residues 73–119 (PETK…KREV) and 126–157 (AKPETKSESKPETTKPETTSETKPETKAEPQK). A Protein kinase domain is found at 186–444 (YSLGRKLGQG…AHQVLCHPWV (259 aa)). ATP contacts are provided by residues 192 to 200 (LGQGQFGTT) and lysine 215. The active-site Proton acceptor is aspartate 310. A Phosphoserine modification is found at serine 350. The tract at residues 450 to 480 (APDKPLDSAVLSRMKQFSAMNKFKKMALRVI) is autoinhibitory domain. 4 consecutive EF-hand domains span residues 487–522 (EEIAGLKQMFKMIDADNSGQITFEELKAGLKRVGAN), 523–558 (LKESEILDLMQAADVDNSGTIDYKEFIAATLHLNKI), 559–592 (EREDHLFAAFSYFDKDESGFITPDELQQACEEFG), and 593–628 (VEDARIEEMMRDVDQDKDGRIDYNEFVAMMQKGSIM). Ca(2+) contacts are provided by aspartate 500, aspartate 502, serine 504, glutamine 506, glutamate 511, aspartate 536, aspartate 538, serine 540, threonine 542, glutamate 547, aspartate 572, aspartate 574, serine 576, glutamate 583, aspartate 606, aspartate 608, aspartate 610, arginine 612, and glutamate 617.

Belongs to the protein kinase superfamily. Ser/Thr protein kinase family. CDPK subfamily. Interacts with 14-3-3 proteins.

Its subcellular location is the endoplasmic reticulum membrane. The enzyme catalyses L-seryl-[protein] + ATP = O-phospho-L-seryl-[protein] + ADP + H(+). It carries out the reaction L-threonyl-[protein] + ATP = O-phospho-L-threonyl-[protein] + ADP + H(+). Its activity is regulated as follows. Activated by calcium. Autophosphorylation may play an important role in the regulation of the kinase activity. May play a role in signal transduction pathways that involve calcium as a second messenger. The protein is Calcium-dependent protein kinase 2 (CPK2) of Arabidopsis thaliana (Mouse-ear cress).